The following is a 486-amino-acid chain: Beta-barrel assembly-enhancing protease (486 aa).

The first 19 residues, 1–19, serve as a signal peptide directing secretion; sequence MIATLLSSLLLTGPISAGA. H134 contributes to the Zn(2+) binding site. E135 is an active-site residue. The Zn(2+) site is built by H138 and E199. Catalysis depends on D203, which acts as the Proton donor.

This sequence belongs to the peptidase M48 family. BepA subfamily. Zn(2+) serves as cofactor.

It localises to the periplasm. Functionally, functions both as a chaperone and a metalloprotease. Maintains the integrity of the outer membrane by promoting either the assembly or the elimination of outer membrane proteins, depending on their folding state. In Yersinia pestis, this protein is Beta-barrel assembly-enhancing protease.